The following is a 217-amino-acid chain: Small ribosomal subunit protein uS11m (217 aa).

The N-terminal 59 residues, 1-59 (MLLQPVWKGCRWTQFVRPIRRWNSTGTNRGVPFSFKDISNQEDITNISYPSSSDSVLTK), are a transit peptide targeting the mitochondrion.

It belongs to the universal ribosomal protein uS11 family. Component of the mitochondrial small ribosomal subunit (mt-SSU). Mature yeast 74S mitochondrial ribosomes consist of a small (37S) and a large (54S) subunit. The 37S small subunit contains a 15S ribosomal RNA (15S mt-rRNA) and 34 different proteins. The 54S large subunit contains a 21S rRNA (21S mt-rRNA) and 46 different proteins.

The protein localises to the mitochondrion. Component of the mitochondrial ribosome (mitoribosome), a dedicated translation machinery responsible for the synthesis of mitochondrial genome-encoded proteins, including at least some of the essential transmembrane subunits of the mitochondrial respiratory chain. The mitoribosomes are attached to the mitochondrial inner membrane and translation products are cotranslationally integrated into the membrane. The chain is Small ribosomal subunit protein uS11m (MRPS18) from Saccharomyces cerevisiae (strain ATCC 204508 / S288c) (Baker's yeast).